We begin with the raw amino-acid sequence, 322 residues long: MIKAGIIGGAGYTAGELIRLLLNHPETEIVFINSSSNAGNRITDVHEGLYGETDLRFTDQLPLDAIDVLFFCTAHGDTKKFMESHNVPEDLKIIDLSMDYRIKSDDHDFIYGLPELNRRATCTAKHVANPGCFATCIQLGLLPLAKNLMLTGDVSVNAITGSTGAGVKPGATSHFSWRNNNISIYKAFDHQHVPEIKQSLKQLQNSFDSEIDFIPYRGDFPRGIFATLVVKTKVALEEIVRMYEEYYAKDSFVHIVDKNIDLKQVVNTNKCLIHLEKHGDKLLIISCIDNLLKGASGQAVHNMNLMFNLEETVGLRLKPSAF.

The active site involves C132.

It belongs to the NAGSA dehydrogenase family. Type 1 subfamily.

It localises to the cytoplasm. It carries out the reaction N-acetyl-L-glutamate 5-semialdehyde + phosphate + NADP(+) = N-acetyl-L-glutamyl 5-phosphate + NADPH + H(+). It functions in the pathway amino-acid biosynthesis; L-arginine biosynthesis; N(2)-acetyl-L-ornithine from L-glutamate: step 3/4. Its function is as follows. Catalyzes the NADPH-dependent reduction of N-acetyl-5-glutamyl phosphate to yield N-acetyl-L-glutamate 5-semialdehyde. The polypeptide is N-acetyl-gamma-glutamyl-phosphate reductase (Bacteroides thetaiotaomicron (strain ATCC 29148 / DSM 2079 / JCM 5827 / CCUG 10774 / NCTC 10582 / VPI-5482 / E50)).